The primary structure comprises 254 residues: tRNA (guanine-N(7)-)-methyltransferase (254 aa).

Residues M1 to G34 are disordered. E87, E112, D139, and D162 together coordinate S-adenosyl-L-methionine. The active site involves D162. Substrate-binding positions include K166, D198, and T233–E236.

It belongs to the class I-like SAM-binding methyltransferase superfamily. TrmB family.

It catalyses the reaction guanosine(46) in tRNA + S-adenosyl-L-methionine = N(7)-methylguanosine(46) in tRNA + S-adenosyl-L-homocysteine. The protein operates within tRNA modification; N(7)-methylguanine-tRNA biosynthesis. Catalyzes the formation of N(7)-methylguanine at position 46 (m7G46) in tRNA. The sequence is that of tRNA (guanine-N(7)-)-methyltransferase from Bordetella bronchiseptica (strain ATCC BAA-588 / NCTC 13252 / RB50) (Alcaligenes bronchisepticus).